The primary structure comprises 373 residues: Probable G-protein coupled receptor 173 (373 aa).

The Extracellular portion of the chain corresponds to 1-26 (MANTTGEPEEVSGALSPPSASAYVKL). The N-linked (GlcNAc...) asparagine glycan is linked to N3. A helical transmembrane segment spans residues 27–47 (VLLGLIMCVSLAGNAILSLLV). Topologically, residues 48-59 (LKERALHKAPYY) are cytoplasmic. Residues 60–80 (FLLDLCLADGIRSAVCFPFVL) traverse the membrane as a helical segment. Topologically, residues 81 to 97 (ASVRHGSSWTFSALSCK) are extracellular. Residues C96 and C174 are joined by a disulfide bond. The chain crosses the membrane as a helical span at residues 98–118 (IVAFMAVLFCFHAAFMLFCIS). Topologically, residues 119-139 (VTRYMAIAHHRFYAKRMTLWT) are cytoplasmic. The chain crosses the membrane as a helical span at residues 140 to 160 (CAAVICMAWTLSVAMAFPPVF). Topologically, residues 161–188 (DVGTYKFIREEDQCIFEHRYFKANDTLG) are extracellular. The N-linked (GlcNAc...) asparagine glycan is linked to N184. The chain crosses the membrane as a helical span at residues 189-209 (FMLMLAVLMAATHAVYGKLLL). Residues 210–287 (FEYRHRKMKP…VKGEKQLGRM (78 aa)) are Cytoplasmic-facing. The chain crosses the membrane as a helical span at residues 288–308 (FYAITLLFLLLWSPYIVACYW). Over 309–322 (RVFVKACAVPHRYL) the chain is Extracellular. A helical membrane pass occupies residues 323–343 (ATAVWMSFAQAAVNPIVCFLL). Residues 344-373 (NKDLKKCLRTHAPCWGTGGAPAPREPYCVM) lie on the Cytoplasmic side of the membrane.

Belongs to the G-protein coupled receptor 1 family. In terms of tissue distribution, expressed in the ovary, specifically in granulosa cells of follicles that have passed the primary stage and in oocytes (at protein level). Expressed at high levels in brain. Lower levels in small intestine. In brain regions, detected in all regions tested. Highest levels in the cerebellum and cerebral cortex.

It localises to the cell membrane. Its function is as follows. Is a receptor for the SMIM20 derived peptides Phoenixin-14 and Phoenixin-20. It mediates the Phoenixin-14 and Phoenixin-20 augmentation of gonadotropin-releasing hormone (GNRH) signaling in the hypothalamus and pituitary gland. In the ovary, it mediates the effects of Phoenixin-14 and Phoenixin-20 induced granulosa cell proliferation during follicular growth. The chain is Probable G-protein coupled receptor 173 (GPR173) from Homo sapiens (Human).